The following is a 404-amino-acid chain: Probable tRNA sulfurtransferase (404 aa).

The THUMP domain occupies 61-166; it reads EAISERLKDV…SGYSYIMCGE (106 aa). Residues 184–185, 209–210, R266, G288, and Q297 contribute to the ATP site; these read LL and HF.

Belongs to the ThiI family.

The protein resides in the cytoplasm. It catalyses the reaction [ThiI sulfur-carrier protein]-S-sulfanyl-L-cysteine + a uridine in tRNA + 2 reduced [2Fe-2S]-[ferredoxin] + ATP + H(+) = [ThiI sulfur-carrier protein]-L-cysteine + a 4-thiouridine in tRNA + 2 oxidized [2Fe-2S]-[ferredoxin] + AMP + diphosphate. The catalysed reaction is [ThiS sulfur-carrier protein]-C-terminal Gly-Gly-AMP + S-sulfanyl-L-cysteinyl-[cysteine desulfurase] + AH2 = [ThiS sulfur-carrier protein]-C-terminal-Gly-aminoethanethioate + L-cysteinyl-[cysteine desulfurase] + A + AMP + 2 H(+). It participates in cofactor biosynthesis; thiamine diphosphate biosynthesis. In terms of biological role, catalyzes the ATP-dependent transfer of a sulfur to tRNA to produce 4-thiouridine in position 8 of tRNAs, which functions as a near-UV photosensor. Also catalyzes the transfer of sulfur to the sulfur carrier protein ThiS, forming ThiS-thiocarboxylate. This is a step in the synthesis of thiazole, in the thiamine biosynthesis pathway. The sulfur is donated as persulfide by IscS. The chain is Probable tRNA sulfurtransferase from Bacillus cereus (strain G9842).